Reading from the N-terminus, the 531-residue chain is Peptide chain release factor 3 (531 aa).

The tr-type G domain occupies 11–280; the sequence is GRRRTFAIIS…AFIRFASRPG (270 aa). GTP-binding positions include 20–27, 88–92, and 142–145; these read SHPDAGKT, DTPGH, and NKLD.

The protein belongs to the TRAFAC class translation factor GTPase superfamily. Classic translation factor GTPase family. PrfC subfamily.

It localises to the cytoplasm. Functionally, increases the formation of ribosomal termination complexes and stimulates activities of RF-1 and RF-2. It binds guanine nucleotides and has strong preference for UGA stop codons. It may interact directly with the ribosome. The stimulation of RF-1 and RF-2 is significantly reduced by GTP and GDP, but not by GMP. In Gloeobacter violaceus (strain ATCC 29082 / PCC 7421), this protein is Peptide chain release factor 3.